Reading from the N-terminus, the 202-residue chain is High mobility group protein B3 (202 aa).

DNA-binding regions (HMG box) lie at residues 9–79 (PKGK…KDYG) and 93–161 (PKRP…ADYK). 2 positions are modified to cysteine sulfonic acid (-SO3H); alternate: C23 and C45. Cysteines 23 and 45 form a disulfide. Residues 71–98 (YDREMKDYGPAKGGKKKKDPNAPKRPPS) form a disordered region. A Cysteine sulfonic acid (-SO3H) modification is found at C104. Residues 161-202 (KSKGKFDGAKGAATKAARKKVEEEDEEEEEDEEEEDEDDDDE) form a disordered region. Residues 183 to 202 (EEDEEEEEDEEEEDEDDDDE) are compositionally biased toward acidic residues.

It belongs to the HMGB family. In terms of processing, reduction/oxidation of cysteine residues Cys-23, Cys-45 and Cys-104 and a possible intramolecular disulfide bond involving Cys-23 and Cys-45 give rise to different redox forms with specific functional activities in various cellular compartments: 1- fully reduced HMGB3 (HMGB3C23hC45hC104h), 2- disulfide HMGB3 (HMGB3C23-C45C104h) and 3- sulfonyl HMGB3 (HMGB3C23soC45soC104so).

Its subcellular location is the nucleus. The protein resides in the chromosome. It localises to the cytoplasm. In terms of biological role, multifunctional protein with various roles in different cellular compartments. May act in a redox sensitive manner. Associates with chromatin and binds DNA with a preference for non-canonical DNA structures such as single-stranded DNA. Can bend DNA and enhance DNA flexibility by looping thus providing a mechanism to promote activities on various gene promoters. Binds to the delta-1 crystallin/ASL1 enhancer. Proposed to be involved in the innate immune response to nucleic acids by acting as a cytoplasmic promiscuous immunogenic DNA/RNA sensor. In Gallus gallus (Chicken), this protein is High mobility group protein B3 (HMGB3).